We begin with the raw amino-acid sequence, 121 residues long: Large ribosomal subunit protein uL18 (121 aa).

The protein belongs to the universal ribosomal protein uL18 family. Part of the 50S ribosomal subunit; part of the 5S rRNA/L5/L18/L25 subcomplex. Contacts the 5S and 23S rRNAs.

This is one of the proteins that bind and probably mediate the attachment of the 5S RNA into the large ribosomal subunit, where it forms part of the central protuberance. The protein is Large ribosomal subunit protein uL18 of Ureaplasma parvum serovar 3 (strain ATCC 27815 / 27 / NCTC 11736).